The following is a 284-amino-acid chain: Bifunctional protein FolD (284 aa).

NADP(+) is bound by residues 165–167 (GRS), serine 190, and isoleucine 231.

Belongs to the tetrahydrofolate dehydrogenase/cyclohydrolase family. Homodimer.

It carries out the reaction (6R)-5,10-methylene-5,6,7,8-tetrahydrofolate + NADP(+) = (6R)-5,10-methenyltetrahydrofolate + NADPH. The enzyme catalyses (6R)-5,10-methenyltetrahydrofolate + H2O = (6R)-10-formyltetrahydrofolate + H(+). It participates in one-carbon metabolism; tetrahydrofolate interconversion. Functionally, catalyzes the oxidation of 5,10-methylenetetrahydrofolate to 5,10-methenyltetrahydrofolate and then the hydrolysis of 5,10-methenyltetrahydrofolate to 10-formyltetrahydrofolate. This Dechloromonas aromatica (strain RCB) protein is Bifunctional protein FolD.